The sequence spans 421 residues: MLALHQTQRDVPCSEVHDALGLQGARSIYFGRPTGRSILSDPIRPRPMPTVTVIIYSDIRFLLEFPSVFLCAYVLPVQRTVIMANEKRGGYRQINQALNICAWEGYLNEQHARLPTLEDVEQISPRVLRVLGQNEGKVRRADGYYTCSSRLIEGPQFTLQGTNTYIVGTGRHRLLIDTGQGIPEWASLISSTLAGSSIELSHVLLTHWHGDHTGGVPDLLRMYPDLSDSIYKHTPGKGQKPISDGQTFRVEGATVRAVHTPGHSHDHMCFILEEENAMFTGDNVLGHGSSAVEVLSTWMSSLRMMQSLRCAVGYPAHGAVIRDLPSKLDLELTQKARREDRVVETLKQMKTETQRNGARGKGSVTVQQLVTAMHGHDLDEQVRTMALEPFVDEVLRKLAQDDRVAFEVRGGQKKWFAIEYT.

4 residues coordinate Zn(2+): histidine 207, histidine 209, aspartate 211, and histidine 212. Catalysis depends on aspartate 211, which acts as the Proton donor/acceptor.

It belongs to the metallo-beta-lactamase superfamily. Zn(2+) serves as cofactor. Specifically expressed in conidia.

It catalyses the reaction atrochrysone carboxyl-[ACP] + H2O = atrochrysone carboxylate + holo-[ACP] + H(+). The protein operates within secondary metabolite biosynthesis. In terms of biological role, atrochrysone carboxyl ACP thioesterase; part of the gene cluster that mediates the biosynthesis of trypacidin, a mycotoxin with antiprotozoal activity and that plays a role in the infection process. The pathway begins with the synthesis of atrochrysone thioester by the polyketide synthase (PKS) tpcC. The atrochrysone carboxyl ACP thioesterase tpcB then breaks the thioester bond and releases the atrochrysone carboxylic acid from tpcC. The decarboxylase tpcK converts atrochrysone carboxylic acid to atrochrysone which is further reduced into emodin anthrone. The next step is performed by the emodin anthrone oxygenase tpcL that catalyzes the oxidation of emodin anthrone to emodin. Emodin O-methyltransferase encoded by tpcA catalyzes methylation of the 8-hydroxy group of emodin to form questin. Ring cleavage of questin by questin oxidase tpcI leads to desmethylsulochrin via several intermediates including questin epoxide. Another methylation step catalyzed by tpcM leads to the formation of sulochrin which is further converted to monomethylsulfochrin by tpcH. Finally, the tpcJ catalyzes the conversion of monomethylsulfochrin to trypacidin. Trypacidin is toxic for human pulmonary and bronchial epithelial cells by initiating the intracellular formation of nitric oxide (NO) and hydrogen peroxide (H(2)O(2)), thus triggering host necrotic cell death. The trypacidin pathway is also able to produce endocrocin via a distinct route from the endocrocin Enc pathway. This Aspergillus fumigatus (strain ATCC MYA-4609 / CBS 101355 / FGSC A1100 / Af293) (Neosartorya fumigata) protein is Atrochrysone carboxyl ACP thioesterase.